The primary structure comprises 570 residues: MFS-type transporter pigP (570 aa).

The interval 14–54 (GMIKKAHPEQTPPDVSHEGDVATEKGDSDGVEQAAPTGPTD) is disordered. Basic and acidic residues predominate over residues 28 to 41 (VSHEGDVATEKGDS). 7 helical membrane passes run 65–85 (VMIM…TSII), 99–119 (LPDV…LVPL), 131–151 (WSFV…GVAT), 162–182 (VAGM…AGCV), 192–212 (GLLM…GGAF), 221–241 (CFYI…FVHI), and 263–283 (LVGF…LQYG). N-linked (GlcNAc...) asparagine glycosylation is present at asparagine 290. The next 7 helical transmembrane spans lie at 293 to 313 (VVIG…LWEW), 336 to 356 (VVYG…PIYF), 369 to 389 (VYIL…GALV), 392 to 412 (FGYY…GNGL), 425 to 445 (WIGY…MPII), 455 to 475 (LIPV…STFL), and 533 to 553 (VFYL…GMGW).

The protein belongs to the major facilitator superfamily. TCR/Tet family.

It is found in the cell membrane. MFS-type transporter; part of the gene cluster that mediates the biosynthesis of azaphilone pigments (MonAzPs), very widely used as food colorant. In Monascus ruber (Mold), this protein is MFS-type transporter pigP.